Reading from the N-terminus, the 280-residue chain is Chaperone for lacto-N-biosidase (280 aa).

Residues 1–37 (MPRRHRFAAAIAAVAVAAVLLVTLTVAVVTHGDGAFA) form the signal peptide.

Homodimer.

Its subcellular location is the secreted. In terms of biological role, chaperone required for active expression of the lacto-N-biosidase LnbX. The chain is Chaperone for lacto-N-biosidase from Bifidobacterium longum subsp. longum (strain ATCC 15707 / DSM 20219 / JCM 1217 / NCTC 11818 / E194b).